The chain runs to 255 residues: MKAYAKANIFLKLTGFDSRKYHLLESRFILLKDLFDELELVDKESDSKKEFEIISNFKCENNIIQKAYLLLSKRYNNELKELFSKKSLKLTKNIPVCAGLGGGSSDCASFLLLMNETLNLKLNLQELINLSIQLGSDIAFFLSGFHSANVSGCGEIIEEFEDDIPNLKWTFPQISCQTKAVYDEFDRGIFDFQKNNNQAQIYKKLSTKELLQNFKNKELNDLFTPCATLYPKMKSYLQEDFFLSGSGSSVFKVDR.

The active site involves Lys6. 95 to 105 (PVCAGLGGGSS) contacts ATP. Asp137 is an active-site residue.

It belongs to the GHMP kinase family. IspE subfamily.

The enzyme catalyses 4-CDP-2-C-methyl-D-erythritol + ATP = 4-CDP-2-C-methyl-D-erythritol 2-phosphate + ADP + H(+). It participates in isoprenoid biosynthesis; isopentenyl diphosphate biosynthesis via DXP pathway; isopentenyl diphosphate from 1-deoxy-D-xylulose 5-phosphate: step 3/6. Its function is as follows. Catalyzes the phosphorylation of the position 2 hydroxy group of 4-diphosphocytidyl-2C-methyl-D-erythritol. The sequence is that of 4-diphosphocytidyl-2-C-methyl-D-erythritol kinase from Campylobacter jejuni subsp. jejuni serotype O:6 (strain 81116 / NCTC 11828).